We begin with the raw amino-acid sequence, 366 residues long: Peptide chain release factor 2 (366 aa).

An N5-methylglutamine modification is found at glutamine 253.

Belongs to the prokaryotic/mitochondrial release factor family. In terms of processing, methylated by PrmC. Methylation increases the termination efficiency of RF2.

It localises to the cytoplasm. Peptide chain release factor 2 directs the termination of translation in response to the peptide chain termination codons UGA and UAA. This chain is Peptide chain release factor 2 (prfB), found in Buchnera aphidicola subsp. Baizongia pistaciae (strain Bp).